The sequence spans 506 residues: 2-isopropylmalate synthase (506 aa).

The 265-residue stretch at 8-272 (LIVFDTTLRD…ETGIQLKEIL (265 aa)) folds into the Pyruvate carboxyltransferase domain. Positions 17, 206, 208, and 242 each coordinate Mn(2+). The tract at residues 396-506 (ELEYVAVTVC…YLNAVNKALL (111 aa)) is regulatory domain.

It belongs to the alpha-IPM synthase/homocitrate synthase family. LeuA type 1 subfamily. As to quaternary structure, homodimer. The cofactor is Mn(2+).

The protein localises to the cytoplasm. The catalysed reaction is 3-methyl-2-oxobutanoate + acetyl-CoA + H2O = (2S)-2-isopropylmalate + CoA + H(+). It functions in the pathway amino-acid biosynthesis; L-leucine biosynthesis; L-leucine from 3-methyl-2-oxobutanoate: step 1/4. Functionally, catalyzes the condensation of the acetyl group of acetyl-CoA with 3-methyl-2-oxobutanoate (2-ketoisovalerate) to form 3-carboxy-3-hydroxy-4-methylpentanoate (2-isopropylmalate). In Methylacidiphilum infernorum (isolate V4) (Methylokorus infernorum (strain V4)), this protein is 2-isopropylmalate synthase.